We begin with the raw amino-acid sequence, 591 residues long: MWVLQALAIMLSIQAGTLDLVETPPVVGNLPVAMPVPLNLPVGGLSPPVLKGPVNHQMLPPKRPVPPPKGGKCAPAARYFLSSDKLHDYLMSTLPPQIEDMVKCDEVNLEGMLADVLNTVESSDLLSLLDGISLLKGGEGGGLGIGGLLGNEGNGDSSKPSSGSKATGGLGQLIPGGIPGTEALGGLLNLGGDKSSGKGLLNGDGLSKIKKPLEDAVENVSGIKDAIQEKVNEVVPDGVKEPLNDVLKMDIKDTLLELKVGQVTLDDMEINMEANGMQVLSMLTATIDGKGVLGPVISLLQFEAKMDVMTTIAVASNNTQCVNLDAQDTHMHVKEMKIQLVETVTGKVPLPVPLPLDQIIPAIVTAKINENLEKSNSCAIVLNDFNNCKNNTGLFSYQVNTARISPKGLVILYCAKANIGNKTVPVPGGRLPPDPKNASIAVTISSTTLKTLVKEVAKNSSVQMDGLEAQITHIAFASQENNTLRVVYKVDITKNGEHFATGETKLFISHGSKISNSTLIPDVKLIRSEHSVVPPEAKEEVEGILSEVGKVAWSNFNETYKKMNIPVGVSSHTLKNSDVKLMKSIDLQAAS.

The signal sequence occupies residues 1–18 (MWVLQALAIMLSIQAGTL). The disordered stretch occupies residues 151-172 (NEGNGDSSKPSSGSKATGGLGQ). N-linked (GlcNAc...) asparagine glycans are attached at residues N421 and N516.

Post-translationally, N-glycosylated. The N-glycans consist mainly of complex sialylated and fucosylated biantennary structures. Expressed in lung. Not detected in other tissues tested (at protein level).

The protein localises to the secreted. In Mus musculus (Mouse), this protein is Vomeromodulin.